The sequence spans 451 residues: Trigger factor (451 aa).

The PPIase FKBP-type domain occupies 165–250; that stretch reads DDKLTIDFEG…LRQIQAREAL (86 aa).

The protein belongs to the FKBP-type PPIase family. Tig subfamily.

It localises to the cytoplasm. The enzyme catalyses [protein]-peptidylproline (omega=180) = [protein]-peptidylproline (omega=0). Its function is as follows. Involved in protein export. Acts as a chaperone by maintaining the newly synthesized protein in an open conformation. Functions as a peptidyl-prolyl cis-trans isomerase. This is Trigger factor from Helicobacter pylori (strain Shi470).